The chain runs to 112 residues: MVKGRQGERVRLYVRGTILGYKRSKSNQYPNTSLVQIEGVNTQEEVNWYKGKRMAYIYKAKTKKNGSHYRCIWGKVTRPHGNSGVVRAKFTSNLPPKSMGSRVRVFMYPSNI.

It belongs to the eukaryotic ribosomal protein eL33 family.

The protein is Large ribosomal subunit protein eL33y (RPL35AC) of Arabidopsis thaliana (Mouse-ear cress).